We begin with the raw amino-acid sequence, 1217 residues long: Sterol 3-beta-glucosyltransferase (1217 aa).

Residues 195 to 232 (EFVRKYFGISEEETLIGHYTGWLLQEVLIQGNLFITNS) enclose the GRAM 1 domain. The region spanning 246 to 343 (AVVLCGKLKL…WVKCLKKQLF (98 aa)) is the PH domain. The GRAM 2 domain occupies 590 to 656 (AKIKDWFNLH…EDIEGYNEIL (67 aa)). Residues S766, R767, D769, N1042, I1072, H1074, H1087, S1090, G1091, T1092, D1111, and Q1112 each coordinate UDP-alpha-D-glucose.

The protein belongs to the glycosyltransferase 28 family.

It is found in the cytoplasm. The protein resides in the membrane. The catalysed reaction is a sterol + UDP-alpha-D-glucose = a sterol 3-beta-D-glucoside + UDP + H(+). It carries out the reaction ergosterol + UDP-alpha-D-glucose = ergosteryl 3-beta-D-glucoside + UDP + H(+). In terms of biological role, sterol glycosyltransferase responsible for the glycosylation of ergosterol to form ergosterol-glucoside. In Vanderwaltozyma polyspora (strain ATCC 22028 / DSM 70294 / BCRC 21397 / CBS 2163 / NBRC 10782 / NRRL Y-8283 / UCD 57-17) (Kluyveromyces polysporus), this protein is Sterol 3-beta-glucosyltransferase.